The chain runs to 468 residues: Zinc finger protein 672 (468 aa).

C2H2-type zinc fingers lie at residues 15–37, 43–65, 71–93, and 100–123; these read YSCSVCGKSFQYSAVLLRHERAH, FCCLECGERCARAADLRAHRWTH, YICSECGQSFSHSGLLDLHLGTH, and RPCRLCGRRFPHVPALLLHRARQH. The C2H2-type 5; degenerate zinc-finger motif lies at 129–151; that stretch reads HRCPLCARSFRQSALPFHLARAH. C2H2-type zinc fingers lie at residues 167–189, 202–224, 230–252, 258–280, 286–308, 314–336, 342–364, 370–392, and 398–420; these read YHCTQCPRAFHSSAGLRNHSRIH, HLCGICGKSFSKSSTLTRHLQRH, FKCPECGKGFLESATLVRHQRTH, YACSDCGRCFSESSTLLRHQRSH, HVCATCGKGFGQRYDLVVHQRSH, FPCPQCGRGFTDRSDLTKHLRTH, YHCELCGKRFTCISNLNVHLRNH, HKCPECGKSFSVASKLALHRKTH, and AECTECGKFFSHGRSLSQHQRSH.

It belongs to the krueppel C2H2-type zinc-finger protein family.

It is found in the nucleus. Functionally, may be involved in transcriptional regulation. This chain is Zinc finger protein 672 (Znf672), found in Mus musculus (Mouse).